Reading from the N-terminus, the 597-residue chain is Aspartate--tRNA(Asp/Asn) ligase (597 aa).

Glutamate 182 provides a ligand contact to L-aspartate. The segment at 206–209 (QLFK) is aspartate. Arginine 228 provides a ligand contact to L-aspartate. ATP is bound by residues 228-230 (RDE) and glutamine 237. Histidine 456 is a binding site for L-aspartate. ATP is bound at residue glutamate 490. Arginine 497 is an L-aspartate binding site. 542 to 545 (GFDR) lines the ATP pocket.

Belongs to the class-II aminoacyl-tRNA synthetase family. Type 1 subfamily. Homodimer.

It localises to the cytoplasm. It catalyses the reaction tRNA(Asx) + L-aspartate + ATP = L-aspartyl-tRNA(Asx) + AMP + diphosphate. In terms of biological role, aspartyl-tRNA synthetase with relaxed tRNA specificity since it is able to aspartylate not only its cognate tRNA(Asp) but also tRNA(Asn). Reaction proceeds in two steps: L-aspartate is first activated by ATP to form Asp-AMP and then transferred to the acceptor end of tRNA(Asp/Asn). This is Aspartate--tRNA(Asp/Asn) ligase from Desulfatibacillum aliphaticivorans.